The sequence spans 169 residues: Probable actin-related protein 2/3 complex subunit 4 (169 aa).

It belongs to the ARPC4 family. As to quaternary structure, component of the Arp2/3 complex, at least composed of arx-1, arx-2, arx-4 and arx-6.

It is found in the cytoplasm. Its subcellular location is the cytoskeleton. Its function is as follows. Functions as actin-binding component of the Arp2/3 complex which is involved in regulation of actin polymerization and together with an activating nucleation-promoting factor (NPF) mediates the formation of branched actin networks. Seems to contact the mother actin filament. Plays a role in time-dependent memory loss and the retention of conditioned behavior over time. The chain is Probable actin-related protein 2/3 complex subunit 4 from Caenorhabditis elegans.